The primary structure comprises 143 residues: 18 kDa heat shock protein (143 aa).

Residues 23-135 (TWSRPTAMPM…KRRRVKVGQG (113 aa)) form the sHSP domain.

This sequence belongs to the small heat shock protein (HSP20) family.

In Streptomyces albus G, this protein is 18 kDa heat shock protein (hsp18).